The following is a 735-amino-acid chain: ATP-dependent DNA helicase Hel308 (735 aa).

Residues glutamine 32 and 50–57 (APTGSGKT) each bind ATP. One can recognise a Helicase ATP-binding domain in the interval 37 to 201 (QAGVEKGENL…WIGGKIVESS (165 aa)). The short motif at 146–149 (DEIH) is the DEAH box element. The Helicase C-terminal domain occupies 235–431 (DLDLAAEAIE…GLRGLRHFIL (197 aa)).

Belongs to the helicase family. Hel308 subfamily. Monomer.

It carries out the reaction Couples ATP hydrolysis with the unwinding of duplex DNA by translocating in the 3'-5' direction.. The catalysed reaction is ATP + H2O = ADP + phosphate + H(+). DNA-dependent ATPase and 3'-5' DNA helicase that may be involved in repair of stalled replication forks. The protein is ATP-dependent DNA helicase Hel308 of Aeropyrum pernix (strain ATCC 700893 / DSM 11879 / JCM 9820 / NBRC 100138 / K1).